The following is a 361-amino-acid chain: Velvet complex subunit B (361 aa).

Disordered regions lie at residues methionine 1–serine 44 and serine 139–glutamine 161. Positions proline 10–serine 26 are enriched in pro residues. The Velvet domain maps to valine 54–arginine 340.

Belongs to the velvet family. VelB subfamily. In terms of assembly, component of the heterotrimeric velvet complex composed of laeA, veA and velB; VeA acting as a bridging protein between laeA and velB. Forms a heterodimeric complex with vosA; the formation of the velB-vosA complex is light-dependent.

It localises to the nucleus. The protein resides in the cytoplasm. Functionally, component of the velvet transcription factor complex that controls sexual/asexual developmental ratio in response to light, promoting sexual development in the darkness while stimulating asexual sporulation under illumination. The velvet complex acts as a global regulator for secondary metabolite gene expression. Component of the velB-VosA heterodimeric complex that plays a dual role in activating genes associated with spore maturation and repressing certain development-associated genes. The velB-VosA complex binds DNA through the DNA-binding domain of vosA that recognizes an 11-nucleotide consensus sequence 5'-CTGGCCGCGGC-3' consisting of two motifs in the promoters of key developmental regulatory genes. Controls the expression of the aflatoxin gene cluster. Likely coordinates with fluG to modulate sclerotial production. This is Velvet complex subunit B from Aspergillus flavus (strain ATCC 200026 / FGSC A1120 / IAM 13836 / NRRL 3357 / JCM 12722 / SRRC 167).